We begin with the raw amino-acid sequence, 287 residues long: 4-diphosphocytidyl-2-C-methyl-D-erythritol kinase (287 aa).

Lysine 10 is an active-site residue. 94–104 (PVAAGLGGGSA) contacts ATP. The active site involves aspartate 136.

It belongs to the GHMP kinase family. IspE subfamily.

It carries out the reaction 4-CDP-2-C-methyl-D-erythritol + ATP = 4-CDP-2-C-methyl-D-erythritol 2-phosphate + ADP + H(+). It functions in the pathway isoprenoid biosynthesis; isopentenyl diphosphate biosynthesis via DXP pathway; isopentenyl diphosphate from 1-deoxy-D-xylulose 5-phosphate: step 3/6. Its function is as follows. Catalyzes the phosphorylation of the position 2 hydroxy group of 4-diphosphocytidyl-2C-methyl-D-erythritol. This chain is 4-diphosphocytidyl-2-C-methyl-D-erythritol kinase, found in Pelotomaculum thermopropionicum (strain DSM 13744 / JCM 10971 / SI).